Here is a 150-residue protein sequence, read N- to C-terminus: Large ribosomal subunit protein bL9 (150 aa).

Belongs to the bacterial ribosomal protein bL9 family.

Functionally, binds to the 23S rRNA. The protein is Large ribosomal subunit protein bL9 of Yersinia pseudotuberculosis serotype I (strain IP32953).